Reading from the N-terminus, the 564-residue chain is Dihydroxy-acid dehydratase (564 aa).

C51 contributes to the [2Fe-2S] cluster binding site. Position 83 (D83) interacts with Mg(2+). C124 serves as a coordination point for [2Fe-2S] cluster. Mg(2+) contacts are provided by D125 and K126. K126 is modified (N6-carboxylysine). C196 is a [2Fe-2S] cluster binding site. E448 provides a ligand contact to Mg(2+). Catalysis depends on S474, which acts as the Proton acceptor.

This sequence belongs to the IlvD/Edd family. In terms of assembly, homodimer. Requires [2Fe-2S] cluster as cofactor. Mg(2+) is required as a cofactor.

The enzyme catalyses (2R)-2,3-dihydroxy-3-methylbutanoate = 3-methyl-2-oxobutanoate + H2O. It carries out the reaction (2R,3R)-2,3-dihydroxy-3-methylpentanoate = (S)-3-methyl-2-oxopentanoate + H2O. It functions in the pathway amino-acid biosynthesis; L-isoleucine biosynthesis; L-isoleucine from 2-oxobutanoate: step 3/4. The protein operates within amino-acid biosynthesis; L-valine biosynthesis; L-valine from pyruvate: step 3/4. Functions in the biosynthesis of branched-chain amino acids. Catalyzes the dehydration of (2R,3R)-2,3-dihydroxy-3-methylpentanoate (2,3-dihydroxy-3-methylvalerate) into 2-oxo-3-methylpentanoate (2-oxo-3-methylvalerate) and of (2R)-2,3-dihydroxy-3-methylbutanoate (2,3-dihydroxyisovalerate) into 2-oxo-3-methylbutanoate (2-oxoisovalerate), the penultimate precursor to L-isoleucine and L-valine, respectively. This is Dihydroxy-acid dehydratase from Polynucleobacter asymbioticus (strain DSM 18221 / CIP 109841 / QLW-P1DMWA-1) (Polynucleobacter necessarius subsp. asymbioticus).